Here is a 2564-residue protein sequence, read N- to C-terminus: Highly reducing polyketide synthase 40 (2564 aa).

In terms of domain architecture, Ketosynthase family 3 (KS3) spans 8–432 (PEPIAIIGMS…GTNAHVIVDR (425 aa)). Residues Cys-181, His-317, and His-358 each act as for beta-ketoacyl synthase activity in the active site. Residues 435 to 482 (EHNHSNGTNGTNGTHHHNGTNGSNGNGTNGTNGTNGTDGFHDTESISD) are disordered. Positions 439–455 (SNGTNGTNGTHHHNGTN) are enriched in low complexity. Basic and acidic residues predominate over residues 473-482 (GFHDTESISD). A malonyl-CoA:ACP transacylase (MAT) domain region spans residues 580-914 (YVFGGQGAQY…SAAENMLRTL (335 aa)). Residues 973–1113 (HELLGNLSAD…GRIRAVVDQG (141 aa)) form an N-terminal hotdog fold region. The tract at residues 973–1280 (HELLGNLSAD…GLRTAQLPSD (308 aa)) is dehydratase (DH) domain. Residues 973-1283 (HELLGNLSAD…TAQLPSDVVN (311 aa)) form the PKS/mFAS DH domain. The Proton acceptor; for dehydratase activity role is filled by His-1005. The tract at residues 1130-1283 (AASVPHHITS…TAQLPSDVVN (154 aa)) is C-terminal hotdog fold. Asp-1199 (proton donor; for dehydratase activity) is an active-site residue. A methyltransferase (CMet) domain region spans residues 1451 to 1556 (LEVGGGTASA…RQLLRPGGTL (106 aa)). The interval 1854–2167 (GLLETFRWVD…AGKHMGKVIL (314 aa)) is enoyl reductase (ER) domain. The interval 2191–2370 (ATYLLVGGFG…SFAIDVGVVS (180 aa)) is ketoreductase (KR) domain. The Carrier domain occupies 2472 to 2549 (EALDAVGQAV…ELIHLVAGKS (78 aa)). Ser-2509 carries the O-(pantetheine 4'-phosphoryl)serine modification.

It functions in the pathway secondary metabolite biosynthesis. Its function is as follows. Highly reducing polyketide synthase; part of the gene cluster that mediates the biosynthesis of the lipopeptides W493 A and B. W493 A and B consist of six amino acid residues D-allo-thr, L-Ala, D-Ala, L-Gln, D-Tyr, and L-Val/L-Ile linked to a 3-hydroxy-4-methyltetradecanoic acid polyketide chain. The biosynthesis starts with formation of the linear polyketide chain by the highly reducing polyketide synthase PKS40. The gene cluster contains a putative acyl-CoA ligase (FPSE_09184) for formation of a CoA thioester polyketide. The thiol bond could be hydrolyzed by the putative thioesterase (FPSE_09186) and then accepted by the first T domain in module 1 of NRPS32. The second T domain is responsible for accepting a threonine, which is adenylated by the A domain and epimerized to the D-allo-threonine formed by the E domain. The five successive modules incorporate Ala, Ala, Gln, Tyr, and Val/Ile into the final product, which is released by cyclization. This Fusarium pseudograminearum (strain CS3096) (Wheat and barley crown-rot fungus) protein is Highly reducing polyketide synthase 40.